The sequence spans 190 residues: dITP/XTP pyrophosphatase (190 aa).

A substrate-binding site is contributed by 7–12; sequence SNNKNK. Catalysis depends on Asp68, which acts as the Proton acceptor. Asp68 contacts Mg(2+). Substrate is bound by residues Thr69, 148 to 151, Lys171, and 176 to 177; these read FGYD and HR.

It belongs to the HAM1 NTPase family. Homodimer. Mg(2+) serves as cofactor.

It carries out the reaction XTP + H2O = XMP + diphosphate + H(+). The enzyme catalyses dITP + H2O = dIMP + diphosphate + H(+). The catalysed reaction is ITP + H2O = IMP + diphosphate + H(+). In terms of biological role, pyrophosphatase that catalyzes the hydrolysis of nucleoside triphosphates to their monophosphate derivatives, with a high preference for the non-canonical purine nucleotides XTP (xanthosine triphosphate), dITP (deoxyinosine triphosphate) and ITP. Seems to function as a house-cleaning enzyme that removes non-canonical purine nucleotides from the nucleotide pool, thus preventing their incorporation into DNA/RNA and avoiding chromosomal lesions. In Flavobacterium psychrophilum (strain ATCC 49511 / DSM 21280 / CIP 103535 / JIP02/86), this protein is dITP/XTP pyrophosphatase.